A 170-amino-acid polypeptide reads, in one-letter code: Photosystem I assembly protein Ycf3 (170 aa).

TPR repeat units lie at residues 35–68 (AFTHYRDGMSAQSEGEYAEALQNYYEAMRLEIDP), 72–105 (SYILYNIGLIHTSNGEHAKALEYYFQALERNSSL), and 120–153 (GEQAIEEGDPETCEVWFDQAADYWKKAISLAPSN).

The protein belongs to the Ycf3 family.

The protein resides in the plastid. It localises to the chloroplast thylakoid membrane. Functionally, essential for the assembly of the photosystem I (PSI) complex. May act as a chaperone-like factor to guide the assembly of the PSI subunits. In Anthoceros angustus (Hornwort), this protein is Photosystem I assembly protein Ycf3.